The primary structure comprises 431 residues: Cyclic GMP-AMP synthase-like receptor (431 aa).

Residues Ser-73 and 85 to 87 (EFD) each bind ATP. Positions 85, 87, and 212 each coordinate Mg(2+). Asp-212 provides a ligand contact to GTP. ATP is bound by residues Lys-290 and 304-308 (SYALK). Glu-316 serves as a coordination point for Mn(2+).

This sequence belongs to the mab-21 family. It depends on Mg(2+) as a cofactor. The cofactor is Mn(2+).

It catalyses the reaction GTP + ATP = 2',3'-cGAMP + 2 diphosphate. The catalysed reaction is GTP + ATP = pppGp(2'-5')A + diphosphate. The enzyme catalyses pppGp(2'-5')A = 2',3'-cGAMP + diphosphate. Its function is as follows. Nucleotidyltransferase that catalyzes the formation of cyclic GMP-AMP (2',3'-cGAMP) from ATP and GTP and plays a key role in innate immunity. Acts as a key sensor of double-stranded RNA (dsRNA), the presence of dsRNA in the cytoplasm being a danger signal that triggers the immune responses. Directly binds dsRNA, activating the nucleotidyltransferase activity, leading to synthesis of 2',3'-cGAMP, a second messenger that binds to and activates Sting, thereby triggering the immune response via activation of the NF-kappa-B transcription factor. This is Cyclic GMP-AMP synthase-like receptor from Frankliniella occidentalis (Western flower thrips).